The chain runs to 143 residues: Sirohydrochlorin cobaltochelatase (143 aa).

The active-site Proton acceptor is His18. Position 18 (His18) interacts with Co(2+). Residue His18 participates in Ni(2+) binding. Residues Arg53 and 78-83 (LAHGVH) each bind substrate. His83 lines the Co(2+) pocket. Residue His83 participates in Ni(2+) binding.

The protein belongs to the CbiX family. CbiXS subfamily. In terms of assembly, homotetramer; dimer of dimers.

The catalysed reaction is Co-sirohydrochlorin + 2 H(+) = sirohydrochlorin + Co(2+). It catalyses the reaction Ni-sirohydrochlorin + 2 H(+) = sirohydrochlorin + Ni(2+). Its pathway is cofactor biosynthesis; adenosylcobalamin biosynthesis; cob(II)yrinate a,c-diamide from sirohydrochlorin (anaerobic route): step 1/10. Its function is as follows. Catalyzes the insertion of Co(2+) into sirohydrochlorin as part of the anaerobic pathway to cobalamin biosynthesis. Involved in the biosynthesis of the unique nickel-containing tetrapyrrole coenzyme F430, the prosthetic group of methyl-coenzyme M reductase (MCR), which plays a key role in methanogenesis and anaerobic methane oxidation (Potential). Catalyzes the insertion of Ni(2+) into sirohydrochlorin to yield Ni-sirohydrochlorin (Potential). The chain is Sirohydrochlorin cobaltochelatase from Methanothermobacter thermautotrophicus (strain ATCC 29096 / DSM 1053 / JCM 10044 / NBRC 100330 / Delta H) (Methanobacterium thermoautotrophicum).